Reading from the N-terminus, the 318-residue chain is NADH-ubiquinone oxidoreductase chain 1 (318 aa).

Helical transmembrane passes span 3-23, 69-89, 102-122, 146-166, 171-191, 222-242, 253-273, and 294-314; these read FMNL…LTLL, VLFI…WIPL, ILFM…SGWA, LAII…STLI, HIWL…STLA, LFFL…IILF, ELYT…FLWV, and LPLT…LAGI.

This sequence belongs to the complex I subunit 1 family. Core subunit of respiratory chain NADH dehydrogenase (Complex I) which is composed of 45 different subunits.

The protein localises to the mitochondrion inner membrane. It carries out the reaction a ubiquinone + NADH + 5 H(+)(in) = a ubiquinol + NAD(+) + 4 H(+)(out). Core subunit of the mitochondrial membrane respiratory chain NADH dehydrogenase (Complex I) which catalyzes electron transfer from NADH through the respiratory chain, using ubiquinone as an electron acceptor. Essential for the catalytic activity and assembly of complex I. This is NADH-ubiquinone oxidoreductase chain 1 (MT-ND1) from Cnephaeus nilssonii (Northern bat).